The sequence spans 206 residues: Translocation protein SEC66 (206 aa).

Over 1 to 27 the chain is Lumenal; it reads MSEFNETKFSNNGTFFETEEPIVETKS. N-linked (GlcNAc...) asparagine glycans are attached at residues asparagine 5 and asparagine 12. Residues 28-48 form a helical; Signal-anchor for type II membrane protein membrane-spanning segment; sequence ISVYTPLIYVFILVVSLVMFA. Residues 49–206 lie on the Cytoplasmic side of the membrane; that stretch reads SSYRKKQAKK…KINNDGRLVN (158 aa).

This sequence to S.pombe SpBC409.21. Component of the heterotetrameric Sec62/63complex composed of SEC62, SEC63, SEC66 and SEC72. The Sec62/63 complex associates with the Sec61 complex to form the Sec complex. Part of a complex consisting of KAR2, SEC63, SEC66 and SEC72.

The protein localises to the endoplasmic reticulum membrane. In terms of biological role, acts as a component of the Sec62/63 complex which is involved in SRP-independent post-translational translocation across the endoplasmic reticulum (ER) and functions together with the Sec61 complex and KAR2 in a channel-forming translocon complex. A cycle of assembly and disassembly of Sec62/63 complex from SEC61 may govern the activity of the translocon. SEC66 is required to attach or retain SEC72 in the SEC63 complex. It is essential for growth at elevated temperatures. The sequence is that of Translocation protein SEC66 (SEC66) from Saccharomyces cerevisiae (strain ATCC 204508 / S288c) (Baker's yeast).